Consider the following 156-residue polypeptide: Small ribosomal subunit protein uS7 (156 aa).

This sequence belongs to the universal ribosomal protein uS7 family. Part of the 30S ribosomal subunit. Contacts proteins S9 and S11.

One of the primary rRNA binding proteins, it binds directly to 16S rRNA where it nucleates assembly of the head domain of the 30S subunit. Is located at the subunit interface close to the decoding center, probably blocks exit of the E-site tRNA. This is Small ribosomal subunit protein uS7 from Streptococcus thermophilus (strain CNRZ 1066).